The primary structure comprises 440 residues: Methylenetetrahydrofolate--tRNA-(uracil-5-)-methyltransferase TrmFO (440 aa).

FAD is bound at residue 14-19; sequence GAGLAG.

Belongs to the MnmG family. TrmFO subfamily. It depends on FAD as a cofactor.

Its subcellular location is the cytoplasm. The enzyme catalyses uridine(54) in tRNA + (6R)-5,10-methylene-5,6,7,8-tetrahydrofolate + NADH + H(+) = 5-methyluridine(54) in tRNA + (6S)-5,6,7,8-tetrahydrofolate + NAD(+). The catalysed reaction is uridine(54) in tRNA + (6R)-5,10-methylene-5,6,7,8-tetrahydrofolate + NADPH + H(+) = 5-methyluridine(54) in tRNA + (6S)-5,6,7,8-tetrahydrofolate + NADP(+). In terms of biological role, catalyzes the folate-dependent formation of 5-methyl-uridine at position 54 (M-5-U54) in all tRNAs. The sequence is that of Methylenetetrahydrofolate--tRNA-(uracil-5-)-methyltransferase TrmFO from Bdellovibrio bacteriovorus (strain ATCC 15356 / DSM 50701 / NCIMB 9529 / HD100).